We begin with the raw amino-acid sequence, 246 residues long: Phosphomannomutase (246 aa).

Aspartate 9 functions as the Nucleophile in the catalytic mechanism. The Mg(2+) site is built by aspartate 9 and aspartate 11. Aspartate 11 acts as the Proton donor/acceptor in catalysis. Alpha-D-mannose 1-phosphate-binding residues include arginine 121, arginine 132, arginine 139, serine 179, and aspartate 181. Aspartate 207 is a Mg(2+) binding site.

This sequence belongs to the eukaryotic PMM family. Homodimer.

Its subcellular location is the cytoplasm. It catalyses the reaction alpha-D-mannose 1-phosphate = D-mannose 6-phosphate. The protein operates within nucleotide-sugar biosynthesis; GDP-alpha-D-mannose biosynthesis; alpha-D-mannose 1-phosphate from D-fructose 6-phosphate: step 2/2. Functionally, involved in the synthesis of the GDP-mannose and dolichol-phosphate-mannose required for a number of critical mannosyl transfer reactions. The sequence is that of Phosphomannomutase (PMM) from Babesia bovis.